We begin with the raw amino-acid sequence, 183 residues long: UPF0398 protein PEPE_0933 (183 aa).

This sequence belongs to the UPF0398 family.

The polypeptide is UPF0398 protein PEPE_0933 (Pediococcus pentosaceus (strain ATCC 25745 / CCUG 21536 / LMG 10740 / 183-1w)).